Here is a 203-residue protein sequence, read N- to C-terminus: Imidazole glycerol phosphate synthase subunit HisH 1 (203 aa).

The 203-residue stretch at 1 to 203 (MIAIIDYNAG…KMIENFVELI (203 aa)) folds into the Glutamine amidotransferase type-1 domain. The active-site Nucleophile is Cys82. Catalysis depends on residues His184 and Glu186.

Heterodimer of HisH and HisF.

It is found in the cytoplasm. The enzyme catalyses 5-[(5-phospho-1-deoxy-D-ribulos-1-ylimino)methylamino]-1-(5-phospho-beta-D-ribosyl)imidazole-4-carboxamide + L-glutamine = D-erythro-1-(imidazol-4-yl)glycerol 3-phosphate + 5-amino-1-(5-phospho-beta-D-ribosyl)imidazole-4-carboxamide + L-glutamate + H(+). It carries out the reaction L-glutamine + H2O = L-glutamate + NH4(+). The protein operates within amino-acid biosynthesis; L-histidine biosynthesis; L-histidine from 5-phospho-alpha-D-ribose 1-diphosphate: step 5/9. In terms of biological role, IGPS catalyzes the conversion of PRFAR and glutamine to IGP, AICAR and glutamate. The HisH subunit provides the glutamine amidotransferase activity that produces the ammonia necessary to HisF for the synthesis of IGP and AICAR. This is Imidazole glycerol phosphate synthase subunit HisH 1 (hisH1) from Methanococcus maripaludis (strain DSM 14266 / JCM 13030 / NBRC 101832 / S2 / LL).